A 247-amino-acid polypeptide reads, in one-letter code: uncharacterized protein (247 aa).

Positions 1 to 35 (MWGPGVTAEGLSVAPAPPPLLPLLLLLALALVAPS) are cleaved as a signal peptide. A glycan (N-linked (GlcNAc...) asparagine) is linked at Asn57. Residues 82 to 102 (LSGLLILLVLFAIGYFLQRII) traverse the membrane as a helical segment. Positions 109–179 (YPRGQARPGQ…GGRSDPSCAS (71 aa)) are disordered. Positions 160–172 (SGGGGRGRGGGGR) are enriched in gly residues.

The protein localises to the membrane. This is an uncharacterized protein from Homo sapiens (Human).